The sequence spans 873 residues: Zinc fingers and homeoboxes protein 1 (873 aa).

The segment at 24–63 (LISDLDEGPPVLTPVENTRAESISSDEEVHESVDSDNQQN) is disordered. Thr-36 bears the Phosphothreonine mark. Phosphoserine occurs at positions 45, 47, and 48. 2 consecutive C2H2-type zinc fingers follow at residues 70–93 (YECK…DSEH) and 102–125 (YVCV…LKYH). Lys-159 participates in a covalent cross-link: Glycyl lysine isopeptide (Lys-Gly) (interchain with G-Cter in SUMO2). A disordered region spans residues 198–236 (VHHNSVEDVPEEKENEIKPDREETVENPSSSASESNTST). Ser-202 is subject to Phosphoserine. Basic and acidic residues predominate over residues 212 to 221 (NEIKPDREET). Over residues 223–236 (ENPSSSASESNTST) the composition is skewed to low complexity. The segment at 272-432 (NSNLIPKVLI…QNNVQKSQVP (161 aa)) is required for dimerization. The interval 272–564 (NSNLIPKVLI…VQPKQSWNPF (293 aa)) is required for interaction with NFYA. Positions 284 to 346 (NSIPTYNAAL…LKHGVSWTPE (63 aa)) form a DNA-binding region, homeobox 1. The segment at 431–454 (VPAAQPTAETKPATAAVPTSQSVK) is disordered. Residues Lys-441, Lys-454, and Lys-485 each participate in a glycyl lysine isopeptide (Lys-Gly) (interchain with G-Cter in SUMO2) cross-link. Residues 464-526 (SFGIRAKKTK…YNQRNSKSNQ (63 aa)) constitute a DNA-binding region (homeobox 2). Disordered stretches follow at residues 544–563 (DETT…SWNP), 626–668 (KEEK…CKKT), and 732–769 (SSMN…INNW). Polar residues predominate over residues 550–562 (PTVGTVQPKQSWN). The homeobox 3 DNA-binding region spans 569–630 (PQKFKEKTAE…KSKALKEEKM (62 aa)). Lys-629 participates in a covalent cross-link: Glycyl lysine isopeptide (Lys-Gly) (interchain with G-Cter in SUMO2). The residue at position 648 (Ser-648) is a Phosphoserine. The homeobox 4 DNA-binding region spans 660-722 (STGKICKKTP…YAWKNGNLKW (63 aa)). Positions 734–768 (MNGLSSLRKRGRGRPKGRGRGRPRGRPRGSKRINN) are required for nuclear localization. A compositionally biased stretch (basic residues) spans 740-764 (LRKRGRGRPKGRGRGRPRGRPRGSK). Residue Ser-774 is modified to Phosphoserine. Positions 777-832 (KFKTGTAILKDYYLKHKFLNEQDLDELVNKSHMGYEQVREWFAERQRRSELGIELF) form a DNA-binding region, homeobox 5. A disordered region spans residues 829 to 873 (IELFEENEEEDEVIDDQEEDEEETDDSDTWEPPRHVKRKLSKSDD). The segment covering 831–857 (LFEENEEEDEVIDDQEEDEEETDDSDT) has biased composition (acidic residues). The required for repressor activity stretch occupies residues 831–873 (LFEENEEEDEVIDDQEEDEEETDDSDTWEPPRHVKRKLSKSDD). The span at 863–873 (HVKRKLSKSDD) shows a compositional bias: basic residues.

The protein belongs to the ZHX family. As to quaternary structure, forms homodimers. Heterodimer (via HD1 domain) with ZHX2 (via HD1 domain). Also forms a heterodimer with ZHX3 which is a prerequisite for repressor activity. Interacts with ATF7IP and NFYA. Interacts (via homeobox domains) with DNMT3B (via PWWP domain).

The protein localises to the nucleus. Acts as a transcriptional repressor. Increases DNMT3B-mediated repressive transcriptional activity when DNMT3B is tethered to DNA. May link molecule between DNMT3B and other co-repressor proteins. This is Zinc fingers and homeoboxes protein 1 (ZHX1) from Pongo pygmaeus (Bornean orangutan).